Consider the following 738-residue polypeptide: NADH dehydrogenase [ubiquinone] iron-sulfur protein 1, mitochondrial (738 aa).

The N-terminal 27 residues, 1-27 (MGLGLLASRALRSSRIIRNSTRTIVST), are a transit peptide targeting the mitochondrion. Residues 66-144 (DVIEVFVDGY…GMKIKTDTPI (79 aa)) enclose the 2Fe-2S ferredoxin-type domain. Residues C100, C111, C114, and C128 each coordinate [2Fe-2S] cluster. Residues 144 to 183 (IAKKAREGVMEFLLMNHPLDCPICDQGGECDLQDQSMAFG) form the 4Fe-4S His(Cys)3-ligated-type domain. Residues H160, C164, C167, C173, C212, C215, C218, and C262 each coordinate [4Fe-4S] cluster. A 4Fe-4S Mo/W bis-MGD-type domain is found at 281-337 (LKGTESIDVTDAVGSNIRIDSRGPEVMRVVPRLNEDINEEWISDKTRFFYDGLKRQR).

Belongs to the complex I 75 kDa subunit family. In terms of assembly, complex I is composed of about 45 different subunits. This is a component of the iron-sulfur (IP) fragment of the enzyme. It depends on [2Fe-2S] cluster as a cofactor. Requires [4Fe-4S] cluster as cofactor.

Its subcellular location is the mitochondrion inner membrane. The enzyme catalyses a ubiquinone + NADH + 5 H(+)(in) = a ubiquinol + NAD(+) + 4 H(+)(out). In terms of biological role, core subunit of the mitochondrial membrane respiratory chain NADH dehydrogenase (Complex I) that is believed to belong to the minimal assembly required for catalysis. Complex I functions in the transfer of electrons from NADH to the respiratory chain. The immediate electron acceptor for the enzyme is believed to be ubiquinone. This is the largest subunit of complex I and it is a component of the iron-sulfur (IP) fragment of the enzyme. It may form part of the active site crevice where NADH is oxidized. In Solanum tuberosum (Potato), this protein is NADH dehydrogenase [ubiquinone] iron-sulfur protein 1, mitochondrial.